Consider the following 378-residue polypeptide: Homeobox protein Meis3 (378 aa).

The interval 24–57 is disordered; the sequence is FSEAAPSVPRAPGPYTPHRPPQLQAPGLDSDSLK. The span at 32-43 shows a compositional bias: pro residues; that stretch reads PRAPGPYTPHRP. The MEIS N-terminal domain occupies 99-182; it reads GGDVCSSDSF…PIDLVIEDRD (84 aa). Residues 203–265 are disordered; sequence NTTWIRDHED…DEDLDLERRR (63 aa). Over residues 230 to 244 the composition is skewed to low complexity; sequence SQSGDNSSDQGDGLD. A DNA-binding region (homeobox; TALE-type) is located at residues 265 to 327; that stretch reads RNKKRGIFPK…NARRRIVQPM (63 aa).

The protein belongs to the TALE/MEIS homeobox family. As to expression, expressed at high levels in the brain. Significant expression also observed in the heart, spleen and lung. Expressed in pancreatic islets (beta-cells and non-beta-cells).

The protein resides in the nucleus. Functionally, transcriptional regulator which directly modulates PDPK1 expression, thus promoting survival of pancreatic beta-cells. Also regulates expression of NDFIP1, BNIP3, and CCNG1. The polypeptide is Homeobox protein Meis3 (Meis3) (Mus musculus (Mouse)).